A 148-amino-acid chain; its full sequence is Ribosome maturation factor RimP (148 aa).

Belongs to the RimP family.

It is found in the cytoplasm. Its function is as follows. Required for maturation of 30S ribosomal subunits. This chain is Ribosome maturation factor RimP, found in Thermosipho africanus (strain TCF52B).